A 341-amino-acid polypeptide reads, in one-letter code: LRP2-binding protein (341 aa).

One copy of the TPR repeat lies at 56–89 (VQANFLLGQLFFEEGWYEDALLQFEKVKDEDNQA). Sel1-like repeat units follow at residues 90 to 122 (LYQA…TSDC), 130 to 165 (YAAA…DNGN), 170 to 203 (LKAQ…GNGS), 204 to 239 (LESQ…ERGN), 240 to 271 (VYAQ…SHDN), and 291 to 326 (AIAT…QLDA).

The protein resides in the cytoplasm. Functionally, may act as an adapter that regulates LRP2 function. The protein is LRP2-binding protein (lrp2bp) of Xenopus laevis (African clawed frog).